A 57-amino-acid polypeptide reads, in one-letter code: COP9 signalosome complex subunit 9 (57 aa).

Belongs to the CSN9 family. In terms of assembly, component of the CSN complex, probably composed of cops1, cops2, cops3, cops4, cops5, cops6, cops7, cops8 and cops9.

The protein resides in the nucleus. Its subcellular location is the cytoplasm. It is found in the nucleoplasm. Component of the COP9 signalosome complex (CSN), a complex involved in various cellular and developmental processes. The CSN complex is an essential regulator of the ubiquitin (Ubl) conjugation pathway by mediating the deneddylation of the cullin subunits of SCF-type E3 ligase complexes, leading to decrease the Ubl ligase activity. May play a role in cell proliferation. This chain is COP9 signalosome complex subunit 9, found in Danio rerio (Zebrafish).